A 314-amino-acid chain; its full sequence is tRNA pseudouridine synthase B (314 aa).

His-43 provides a ligand contact to substrate. Asp-48 serves as the catalytic Nucleophile. Substrate contacts are provided by Tyr-76, Tyr-179, and Leu-200.

Belongs to the pseudouridine synthase TruB family. Type 1 subfamily.

It catalyses the reaction uridine(55) in tRNA = pseudouridine(55) in tRNA. Responsible for synthesis of pseudouridine from uracil-55 in the psi GC loop of transfer RNAs. This Shigella dysenteriae serotype 1 (strain Sd197) protein is tRNA pseudouridine synthase B.